The chain runs to 512 residues: AMP phosphorylase (512 aa).

AMP-binding positions include G166, 192-197 (SRAITG), and T201. Catalysis depends on D254, which acts as the Proton donor. The AMP site is built by S262 and K286.

Belongs to the thymidine/pyrimidine-nucleoside phosphorylase family. Type 2 subfamily.

It catalyses the reaction AMP + phosphate = alpha-D-ribose 1,5-bisphosphate + adenine. The catalysed reaction is CMP + phosphate = cytosine + alpha-D-ribose 1,5-bisphosphate. The enzyme catalyses UMP + phosphate = alpha-D-ribose 1,5-bisphosphate + uracil. In terms of biological role, catalyzes the conversion of AMP and phosphate to adenine and ribose 1,5-bisphosphate (R15P). Exhibits phosphorylase activity toward CMP and UMP in addition to AMP. Functions in an archaeal AMP degradation pathway, together with R15P isomerase and RubisCO. This Methanothrix thermoacetophila (strain DSM 6194 / JCM 14653 / NBRC 101360 / PT) (Methanosaeta thermophila) protein is AMP phosphorylase.